Reading from the N-terminus, the 355-residue chain is 3'-5' exonuclease (355 aa).

The interval 1-119 (MDKFLIKMPI…TPSPEKVKPE (119 aa)) is disordered. Basic and acidic residues-rich tracts occupy residues 13-29 (KNNE…KETP) and 71-91 (KNLD…ENPP). Phosphoserine occurs at positions 104 and 112. The 3'-5' exonuclease domain maps to 154-315 (TDVDVVPMAF…GQVIYRDLEQ (162 aa)). Asp164, Glu166, and Asp302 together coordinate Mg(2+).

This sequence belongs to the WRNexo family.

Its subcellular location is the nucleus. In terms of biological role, has exonuclease activity on both single-stranded and duplex templates bearing overhangs, but not blunt ended duplex DNA, and cleaves in a 3'-5' direction. Essential for the formation of DNA replication focal centers. Has an important role in maintaining genome stability. The protein is 3'-5' exonuclease of Drosophila persimilis (Fruit fly).